We begin with the raw amino-acid sequence, 356 residues long: MKREILLERIDKLKQIMPWYVLEYYQSKLAVPYSFTTLYEYLKEYDRFFSWVLESGISNADKMSDIPLSVLENMSKKDMESFILYLRERPLLNANTTKQGVSQTTINRTLSALSSLYKYLTEEVENDQGEPYFYRNVMKKVSTKKKKETLAARAENIKQKLFLGDETEGFLTYIDQEYPQQLSNRALSSFNKNKERDLAIIALLLASGVRLSEAVNLDLRDLNLKMMVIDVTRKGGKRDSVNVAAFAKPYLENYLAIRNQRYKTEKIDTALFLTLYRGVPNRIDASSVEKMVAKYSEDFKVRVTPHKLRHTLATRLYDATKSQVLVSHQLGHASTQVTDLYTHIVNDEQKNALDSL.

The region spanning 16-121 (IMPWYVLEYY…ALSSLYKYLT (106 aa)) is the Core-binding (CB) domain. The Tyr recombinase domain occupies 169–354 (GFLTYIDQEY…VNDEQKNALD (186 aa)). Catalysis depends on residues Arg-210, Lys-234, His-306, Arg-309, and His-332. The active-site O-(3'-phospho-DNA)-tyrosine intermediate is the Tyr-341.

This sequence belongs to the 'phage' integrase family. XerS subfamily.

Its subcellular location is the cytoplasm. FtsK is required for recombination. Site-specific tyrosine recombinase, which acts by catalyzing the cutting and rejoining of the recombining DNA molecules. Essential to convert dimers of the bacterial chromosome into monomers to permit their segregation at cell division. The polypeptide is Tyrosine recombinase XerS (Streptococcus pneumoniae (strain Hungary19A-6)).